A 192-amino-acid polypeptide reads, in one-letter code: Thymidine kinase (192 aa).

Residues 9-16 and 87-90 contribute to the ATP site; these read SAMNAGKS and DECQ. The active-site Proton acceptor is glutamate 88. 4 residues coordinate Zn(2+): cysteine 145, cysteine 147, cysteine 182, and histidine 185.

This sequence belongs to the thymidine kinase family. In terms of assembly, homotetramer.

It localises to the cytoplasm. It carries out the reaction thymidine + ATP = dTMP + ADP + H(+). This chain is Thymidine kinase, found in Vibrio vulnificus (strain CMCP6).